The primary structure comprises 264 residues: Thymidylate synthase (264 aa).

DUMP is bound by residues Arg21 and 126–127 (RR). Cys146 (nucleophile) is an active-site residue. Residues 166-169 (RSAD), Asn177, and 207-209 (HLY) each bind dUMP. Asp169 provides a ligand contact to (6R)-5,10-methylene-5,6,7,8-tetrahydrofolate. Ala263 is a binding site for (6R)-5,10-methylene-5,6,7,8-tetrahydrofolate.

Belongs to the thymidylate synthase family. Bacterial-type ThyA subfamily. As to quaternary structure, homodimer.

The protein resides in the cytoplasm. It carries out the reaction dUMP + (6R)-5,10-methylene-5,6,7,8-tetrahydrofolate = 7,8-dihydrofolate + dTMP. The protein operates within pyrimidine metabolism; dTTP biosynthesis. Its function is as follows. Catalyzes the reductive methylation of 2'-deoxyuridine-5'-monophosphate (dUMP) to 2'-deoxythymidine-5'-monophosphate (dTMP) while utilizing 5,10-methylenetetrahydrofolate (mTHF) as the methyl donor and reductant in the reaction, yielding dihydrofolate (DHF) as a by-product. This enzymatic reaction provides an intracellular de novo source of dTMP, an essential precursor for DNA biosynthesis. In Halorhodospira halophila (strain DSM 244 / SL1) (Ectothiorhodospira halophila (strain DSM 244 / SL1)), this protein is Thymidylate synthase.